Reading from the N-terminus, the 541-residue chain is Formimidoyltransferase-cyclodeaminase (541 aa).

The segment at 1-181 (MSQLVECVPN…GATVTGARKF (181 aa)) is formiminotransferase N-subdomain. His82 serves as the catalytic For formimidoyltransferase activity. 163–172 (GPSSFVPSWG) provides a ligand contact to folate. The tract at residues 182 to 326 (LIAFNINLLS…PKERIIEYLV (145 aa)) is formiminotransferase C-subdomain. The tract at residues 327–334 (PDSGPEQS) is linker. The tract at residues 335 to 541 (LLDTSLRGFV…VLGSLEARKE (207 aa)) is cyclodeaminase/cyclohydrolase. The active-site For cyclodeaminase activity is the Asp412. Phosphoserine is present on Ser520.

The protein in the C-terminal section; belongs to the cyclodeaminase/cyclohydrolase family. In the N-terminal section; belongs to the formiminotransferase family. Homooctamer, including four polyglutamate binding sites. The subunits are arranged as a tetramer of dimers, and form a planar ring-shaped structure.

The protein resides in the cytoplasm. The protein localises to the cytoskeleton. It is found in the microtubule organizing center. Its subcellular location is the centrosome. It localises to the centriole. The protein resides in the golgi apparatus. It catalyses the reaction 5-formimidoyltetrahydrofolate + L-glutamate = N-formimidoyl-L-glutamate + (6S)-5,6,7,8-tetrahydrofolate. The catalysed reaction is (6S)-5-formyl-5,6,7,8-tetrahydrofolate + L-glutamate = N-formyl-L-glutamate + (6S)-5,6,7,8-tetrahydrofolate + H(+). The enzyme catalyses 5-formimidoyltetrahydrofolate + 2 H(+) = (6R)-5,10-methenyltetrahydrofolate + NH4(+). The protein operates within amino-acid degradation; L-histidine degradation into L-glutamate; L-glutamate from N-formimidoyl-L-glutamate (transferase route): step 1/1. It participates in one-carbon metabolism; tetrahydrofolate interconversion. In terms of biological role, folate-dependent enzyme, that displays both transferase and deaminase activity. Serves to channel one-carbon units from formiminoglutamate to the folate pool. Binds and promotes bundling of vimentin filaments originating from the Golgi. The sequence is that of Formimidoyltransferase-cyclodeaminase (Ftcd) from Mus musculus (Mouse).